The sequence spans 304 residues: Acetylglutamate kinase (304 aa).

Substrate contacts are provided by residues 70-71 (GG), R92, and N196.

This sequence belongs to the acetylglutamate kinase family. ArgB subfamily.

The protein resides in the cytoplasm. The catalysed reaction is N-acetyl-L-glutamate + ATP = N-acetyl-L-glutamyl 5-phosphate + ADP. Its pathway is amino-acid biosynthesis; L-arginine biosynthesis; N(2)-acetyl-L-ornithine from L-glutamate: step 2/4. Catalyzes the ATP-dependent phosphorylation of N-acetyl-L-glutamate. This Methanococcoides burtonii (strain DSM 6242 / NBRC 107633 / OCM 468 / ACE-M) protein is Acetylglutamate kinase.